We begin with the raw amino-acid sequence, 211 residues long: Large ribosomal subunit protein uL4 (211 aa).

Disordered stretches follow at residues M1–P28 and T48–Y99. Residues R10–P28 are compositionally biased toward basic and acidic residues.

It belongs to the universal ribosomal protein uL4 family. Part of the 50S ribosomal subunit.

Functionally, one of the primary rRNA binding proteins, this protein initially binds near the 5'-end of the 23S rRNA. It is important during the early stages of 50S assembly. It makes multiple contacts with different domains of the 23S rRNA in the assembled 50S subunit and ribosome. Its function is as follows. Forms part of the polypeptide exit tunnel. This chain is Large ribosomal subunit protein uL4, found in Rubrobacter xylanophilus (strain DSM 9941 / JCM 11954 / NBRC 16129 / PRD-1).